A 156-amino-acid chain; its full sequence is SsrA-binding protein (156 aa).

Belongs to the SmpB family.

The protein resides in the cytoplasm. In terms of biological role, required for rescue of stalled ribosomes mediated by trans-translation. Binds to transfer-messenger RNA (tmRNA), required for stable association of tmRNA with ribosomes. tmRNA and SmpB together mimic tRNA shape, replacing the anticodon stem-loop with SmpB. tmRNA is encoded by the ssrA gene; the 2 termini fold to resemble tRNA(Ala) and it encodes a 'tag peptide', a short internal open reading frame. During trans-translation Ala-aminoacylated tmRNA acts like a tRNA, entering the A-site of stalled ribosomes, displacing the stalled mRNA. The ribosome then switches to translate the ORF on the tmRNA; the nascent peptide is terminated with the 'tag peptide' encoded by the tmRNA and targeted for degradation. The ribosome is freed to recommence translation, which seems to be the essential function of trans-translation. The sequence is that of SsrA-binding protein from Desulfitobacterium hafniense (strain DSM 10664 / DCB-2).